Reading from the N-terminus, the 323-residue chain is Acetyl-coenzyme A carboxylase carboxyl transferase subunit alpha (323 aa).

Positions 39-293 (RLSKKSQQLT…RRALADSLRQ (255 aa)) constitute a CoA carboxyltransferase C-terminal domain.

The protein belongs to the AccA family. Acetyl-CoA carboxylase is a heterohexamer composed of biotin carboxyl carrier protein (AccB), biotin carboxylase (AccC) and two subunits each of ACCase subunit alpha (AccA) and ACCase subunit beta (AccD).

It localises to the cytoplasm. It carries out the reaction N(6)-carboxybiotinyl-L-lysyl-[protein] + acetyl-CoA = N(6)-biotinyl-L-lysyl-[protein] + malonyl-CoA. Its pathway is lipid metabolism; malonyl-CoA biosynthesis; malonyl-CoA from acetyl-CoA: step 1/1. Component of the acetyl coenzyme A carboxylase (ACC) complex. First, biotin carboxylase catalyzes the carboxylation of biotin on its carrier protein (BCCP) and then the CO(2) group is transferred by the carboxyltransferase to acetyl-CoA to form malonyl-CoA. In Paraburkholderia phymatum (strain DSM 17167 / CIP 108236 / LMG 21445 / STM815) (Burkholderia phymatum), this protein is Acetyl-coenzyme A carboxylase carboxyl transferase subunit alpha.